A 355-amino-acid polypeptide reads, in one-letter code: Protein MxiC (355 aa).

Its subcellular location is the secreted. It is found in the host cell. Its function is as follows. Necessary for the secretion of IPA invasins. The sequence is that of Protein MxiC (mxiC) from Shigella flexneri.